The chain runs to 446 residues: Citrate/sodium symporter (446 aa).

The next 5 membrane-spanning stretches (helical) occupy residues 23–43, 46–66, 79–99, 110–130, and 148–168; these read IFGMPLPLYAFALITLLLSHF, AIPTDLVGGFALMFVMGAIFG, IGGAPVMIFLVAAYFVYAGIF, VMDKSNFLNLFIAVLITGAIL, and ILAGIVGASLFGIVIGLCFGI. The Na(+) site is built by isoleucine 181 and glycine 183. Citrate contacts are provided by asparagine 186 and glycine 187. Transmembrane regions (helical) follow at residues 213-233, 267-287, 289-309, 335-355, and 364-384; these read IAILTIANIFAIIFAALLDMI, ETAVGMVLSTTCFLLAYVVAK, ILPSIGGVSIHYFAWMVLIVA, QLLWVLMVGVGVCYTDLQEII, and VIAAIIVVGAVVGAAIGGWLI. Na(+) contacts are provided by methionine 399 and asparagine 401. The citrate site is built by arginine 402, glycine 404, serine 405, and arginine 428. Residues 425–445 traverse the membrane as a helical segment; the sequence is ISSRLGGGIVLVIASIVFSMM.

It belongs to the 2-hydroxycarboxylate transporter (2-HCT) (TC 2.A.24) family. As to quaternary structure, homodimer.

The protein localises to the cell inner membrane. The catalysed reaction is citrate(out) + 2 Na(+)(out) = citrate(in) + 2 Na(+)(in). Functionally, secondary active transporter that catalyzes the uptake of citrate across the membrane with the concomitant uptake of sodium. Is specific for citrate. The chain is Citrate/sodium symporter from Salmonella dublin.